We begin with the raw amino-acid sequence, 25 residues long: LDVKKIICVACKIKPNPACKKICPK.

Disulfide bonds link C8–C23 and C11–C19.

It localises to the target cell membrane. Its subcellular location is the secreted. In terms of biological role, antimicrobial peptide active against Gram-positive bacteria M.luteus (MIC=1.6 uM) and B.subtilis (MIC=3.3 uM). Less active against Gram-negative bacteria E.coli (MIC=63.3 uM) and yeast C.albicans (MIC=24.2 uM). Not active against S.aureus and P.aeruginosa. Has no hemolytic activity against human erythrocytes. Probably acts by disrupting membranes of target cells. The sequence is that of Panurgine K from Panurgus calcaratus (Solitary bee).